The sequence spans 267 residues: 4-hydroxy-tetrahydrodipicolinate reductase (267 aa).

8 to 13 is an NAD(+) binding site; sequence GASGRM. NADP(+) is bound at residue Arg35. NAD(+)-binding positions include 98–100 and 122–125; these read GTT and APNM. His155 (proton donor/acceptor) is an active-site residue. His156 is a (S)-2,3,4,5-tetrahydrodipicolinate binding site. Lys159 serves as the catalytic Proton donor. 165–166 is a binding site for (S)-2,3,4,5-tetrahydrodipicolinate; sequence GT.

This sequence belongs to the DapB family.

The protein resides in the cytoplasm. It carries out the reaction (S)-2,3,4,5-tetrahydrodipicolinate + NAD(+) + H2O = (2S,4S)-4-hydroxy-2,3,4,5-tetrahydrodipicolinate + NADH + H(+). It catalyses the reaction (S)-2,3,4,5-tetrahydrodipicolinate + NADP(+) + H2O = (2S,4S)-4-hydroxy-2,3,4,5-tetrahydrodipicolinate + NADPH + H(+). It functions in the pathway amino-acid biosynthesis; L-lysine biosynthesis via DAP pathway; (S)-tetrahydrodipicolinate from L-aspartate: step 4/4. Its function is as follows. Catalyzes the conversion of 4-hydroxy-tetrahydrodipicolinate (HTPA) to tetrahydrodipicolinate. In Hahella chejuensis (strain KCTC 2396), this protein is 4-hydroxy-tetrahydrodipicolinate reductase.